The chain runs to 290 residues: Light-independent protochlorophyllide reductase iron-sulfur ATP-binding protein (290 aa).

Residues Gly-10 to Thr-15 and Lys-39 contribute to the ATP site. Position 14 (Ser-14) interacts with Mg(2+). [4Fe-4S] cluster-binding residues include Cys-95 and Cys-129. Asn-180–Arg-181 is a binding site for ATP.

It belongs to the NifH/BchL/ChlL family. In terms of assembly, homodimer. Protochlorophyllide reductase is composed of three subunits; ChlL, ChlN and ChlB. [4Fe-4S] cluster is required as a cofactor.

The protein localises to the plastid. The protein resides in the chloroplast. The enzyme catalyses chlorophyllide a + oxidized 2[4Fe-4S]-[ferredoxin] + 2 ADP + 2 phosphate = protochlorophyllide a + reduced 2[4Fe-4S]-[ferredoxin] + 2 ATP + 2 H2O. It functions in the pathway porphyrin-containing compound metabolism; chlorophyll biosynthesis (light-independent). Component of the dark-operative protochlorophyllide reductase (DPOR) that uses Mg-ATP and reduced ferredoxin to reduce ring D of protochlorophyllide (Pchlide) to form chlorophyllide a (Chlide). This reaction is light-independent. The L component serves as a unique electron donor to the NB-component of the complex, and binds Mg-ATP. The sequence is that of Light-independent protochlorophyllide reductase iron-sulfur ATP-binding protein from Chaetosphaeridium globosum (Charophycean green alga).